Here is a 642-residue protein sequence, read N- to C-terminus: MPVITLPDGSKREFAHPVSTLDVAADIGPGLAKACIAGRVNGELKDACDLIETDAELSIITAKDEEGIEILRHSCAHLLGHAIKQLWPQTKMAIGPVIDNGFYYDIDLEHKLTQEDIEALEKRMLELAKTNYDVVKRVVSWQEARDTFAARGEEYKIAILDENISKDATPALYHHEEYTDMCRGPHVPNMRFCHHFKLMSIAGAYWRGNSENKMLQRIYGTAWADKKALSTHLARLEEAAKRDHRKIGKQLDLYHMQEEAPGMVFWHNDGWSIFLELERFIRRKLNQYTYQEVKGPLMMDRVLWERSGHWDKYSEAMFTTSSENREYAVKPMNCPGHVQIFNQGLKSYRDLPLRMAEFGCCHRNEPSGSLHGLMRVRGFTQDDAHIFCTEDQVQAEVSSCIQMVYDTYSTFGFENIVVKLSTRPEKRIGDDAMWDRAEEALKQALRAKNIEFTILPGEGAFYGPKIEFTLHDCLDRAWQCGTVQLDYALPSRLGATYVAEDNSRQTPVMIHRAILGSLERFLGILIEEYAGRFPTWLAPMQVVVMNITDKQADYVEEVVKFFKEQGIRASFDLRNEKIGFKIREHTLRRVPYLLVVGDQEMENKEVAVRTRDGVDLGKMRIEDFAAKIHQQISLRSLKLLEE.

A TGS domain is found at 1–61 (MPVITLPDGS…ETDAELSIIT (61 aa)). The segment at 243 to 534 (DHRKIGKQLD…LIEEYAGRFP (292 aa)) is catalytic. Residues Cys-334, His-385, and His-511 each coordinate Zn(2+).

The protein belongs to the class-II aminoacyl-tRNA synthetase family. Homodimer. The cofactor is Zn(2+).

It is found in the cytoplasm. The catalysed reaction is tRNA(Thr) + L-threonine + ATP = L-threonyl-tRNA(Thr) + AMP + diphosphate + H(+). Catalyzes the attachment of threonine to tRNA(Thr) in a two-step reaction: L-threonine is first activated by ATP to form Thr-AMP and then transferred to the acceptor end of tRNA(Thr). Also edits incorrectly charged L-seryl-tRNA(Thr). This is Threonine--tRNA ligase from Shewanella sp. (strain MR-7).